A 182-amino-acid polypeptide reads, in one-letter code: Large ribosomal subunit protein uL10 (182 aa).

This sequence belongs to the universal ribosomal protein uL10 family. As to quaternary structure, part of the ribosomal stalk of the 50S ribosomal subunit. The N-terminus interacts with L11 and the large rRNA to form the base of the stalk. The C-terminus forms an elongated spine to which L12 dimers bind in a sequential fashion forming a multimeric L10(L12)X complex.

Functionally, forms part of the ribosomal stalk, playing a central role in the interaction of the ribosome with GTP-bound translation factors. This is Large ribosomal subunit protein uL10 from Janthinobacterium sp. (strain Marseille) (Minibacterium massiliensis).